We begin with the raw amino-acid sequence, 370 residues long: Anhydro-N-acetylmuramic acid kinase (370 aa).

12 to 19 (GTSLDGVD) provides a ligand contact to ATP.

It belongs to the anhydro-N-acetylmuramic acid kinase family.

The enzyme catalyses 1,6-anhydro-N-acetyl-beta-muramate + ATP + H2O = N-acetyl-D-muramate 6-phosphate + ADP + H(+). The protein operates within amino-sugar metabolism; 1,6-anhydro-N-acetylmuramate degradation. It participates in cell wall biogenesis; peptidoglycan recycling. In terms of biological role, catalyzes the specific phosphorylation of 1,6-anhydro-N-acetylmuramic acid (anhMurNAc) with the simultaneous cleavage of the 1,6-anhydro ring, generating MurNAc-6-P. Is required for the utilization of anhMurNAc either imported from the medium or derived from its own cell wall murein, and thus plays a role in cell wall recycling. This is Anhydro-N-acetylmuramic acid kinase from Proteus mirabilis (strain HI4320).